The following is a 151-amino-acid chain: Transcriptional repressor NrdR (151 aa).

The segment at 3-34 is a zinc-finger region; the sequence is CPFCNSVDTSVKNSRPSDCKMSVRRRRSCDSC. Positions 49–139 constitute an ATP-cone domain; the sequence is VKVLKKDGSV…VYMNFSDVND (91 aa).

The protein belongs to the NrdR family. Zn(2+) serves as cofactor.

Functionally, negatively regulates transcription of bacterial ribonucleotide reductase nrd genes and operons by binding to NrdR-boxes. This chain is Transcriptional repressor NrdR, found in Anaplasma marginale (strain Florida).